The sequence spans 511 residues: 2,3-bisphosphoglycerate-independent phosphoglycerate mutase (511 aa).

Positions 12 and 62 each coordinate Mn(2+). Ser-62 acts as the Phosphoserine intermediate in catalysis. Substrate is bound by residues His-123, 153-154 (RD), Arg-185, Arg-191, 260-263 (RPDR), and Lys-333. Asp-400, His-404, Asp-441, His-442, and His-460 together coordinate Mn(2+).

The protein belongs to the BPG-independent phosphoglycerate mutase family. Monomer. Requires Mn(2+) as cofactor.

It carries out the reaction (2R)-2-phosphoglycerate = (2R)-3-phosphoglycerate. It participates in carbohydrate degradation; glycolysis; pyruvate from D-glyceraldehyde 3-phosphate: step 3/5. Functionally, catalyzes the interconversion of 2-phosphoglycerate and 3-phosphoglycerate. This Clostridium novyi (strain NT) protein is 2,3-bisphosphoglycerate-independent phosphoglycerate mutase.